A 211-amino-acid chain; its full sequence is Prolactin (211 aa).

The first 24 residues, 1 to 24 (MTHRRTKLFMMAAVVSYVMTSCGA), serve as a signal peptide directing secretion. Intrachain disulfides connect Cys-70-Cys-184 and Cys-201-Cys-211.

Belongs to the somatotropin/prolactin family.

Its subcellular location is the secreted. This chain is Prolactin (prl), found in Paralichthys olivaceus (Bastard halibut).